A 195-amino-acid chain; its full sequence is Thymidine kinase (195 aa).

Residues 9 to 16 (STMNAGKS) and 87 to 90 (DEAQ) each bind ATP. Glu-88 functions as the Proton acceptor in the catalytic mechanism. Zn(2+) contacts are provided by Cys-145, Cys-147, Cys-182, and His-185.

This sequence belongs to the thymidine kinase family. Homotetramer.

It is found in the cytoplasm. The catalysed reaction is thymidine + ATP = dTMP + ADP + H(+). This is Thymidine kinase from Mannheimia succiniciproducens (strain KCTC 0769BP / MBEL55E).